Reading from the N-terminus, the 243-residue chain is Small ribosomal subunit protein uS3 (243 aa).

Residues 38-106 (IRKYLNARLA…DIQINIFEVK (69 aa)) enclose the KH type-2 domain. A disordered region spans residues 217-243 (TQTKESGRGGNGNNNGGKNFKRKKNNR).

This sequence belongs to the universal ribosomal protein uS3 family. Part of the 30S ribosomal subunit. Forms a tight complex with proteins S10 and S14.

Functionally, binds the lower part of the 30S subunit head. Binds mRNA in the 70S ribosome, positioning it for translation. In Phocaeicola vulgatus (strain ATCC 8482 / DSM 1447 / JCM 5826 / CCUG 4940 / NBRC 14291 / NCTC 11154) (Bacteroides vulgatus), this protein is Small ribosomal subunit protein uS3.